Reading from the N-terminus, the 536-residue chain is Maintenance of mitochondrial morphology protein 1 (536 aa).

Topologically, residues 1 to 25 (MAGPSNQTQPPPPVLTQPSLSFTQG) are lumenal. Residues 26 to 46 (LLVGQLSVVLLIGAFIKFFIF) form a helical membrane-spanning segment. At 47–536 (GEAPPHPSRN…GSMPDPVVVT (490 aa)) the chain is on the cytoplasmic side. 4 disordered regions span residues 52–135 (HPSR…SHQP), 275–331 (GPGT…ATAA), 416–467 (GRTG…GGSM), and 505–536 (YGGA…VVVT). Composition is skewed to polar residues over residues 69–81 (YSLN…SSPR), 88–105 (STSN…NTRS), and 112–121 (YSATPTNPTS). Over residues 122 to 132 (KHSRSRPHHSS) the composition is skewed to basic residues. One can recognise an SMP-LTD domain in the interval 134–409 (QPESLDWFNV…EPRVQVVGLP (276 aa)). Over residues 321-331 (TNTNTAGATAA) the composition is skewed to low complexity. Gly residues-rich tracts occupy residues 442–467 (TAGG…GGSM) and 507–517 (GAQGGGGGGGR).

The protein belongs to the MMM1 family. As to quaternary structure, homodimer. Component of the ER-mitochondria encounter structure (ERMES) or MDM complex, composed of MMM1, MDM10, MDM12 and MDM34. An MMM1 homodimer associates with one molecule of MDM12 on each side in a pairwise head-to-tail manner, and the SMP-LTD domains of MMM1 and MDM12 generate a continuous hydrophobic tunnel for phospholipid trafficking.

Its subcellular location is the endoplasmic reticulum membrane. In terms of biological role, component of the ERMES/MDM complex, which serves as a molecular tether to connect the endoplasmic reticulum (ER) and mitochondria. Components of this complex are involved in the control of mitochondrial shape and protein biogenesis, and function in nonvesicular lipid trafficking between the ER and mitochondria. The MDM12-MMM1 subcomplex functions in the major beta-barrel assembly pathway that is responsible for biogenesis of all outer membrane beta-barrel proteins, and acts in a late step after the SAM complex. The MDM10-MDM12-MMM1 subcomplex further acts in the TOM40-specific pathway after the action of the MDM12-MMM1 complex. Essential for establishing and maintaining the structure of mitochondria and maintenance of mtDNA nucleoids. The chain is Maintenance of mitochondrial morphology protein 1 from Ajellomyces dermatitidis (strain ER-3 / ATCC MYA-2586) (Blastomyces dermatitidis).